The chain runs to 262 residues: 3-methyl-2-oxobutanoate hydroxymethyltransferase (262 aa).

Residues Asp44 and Asp83 each coordinate Mg(2+). Residues 44-45, Asp83, and Lys112 each bind 3-methyl-2-oxobutanoate; that span reads DS. Position 114 (Glu114) interacts with Mg(2+). Residue Glu181 is the Proton acceptor of the active site.

The protein belongs to the PanB family. As to quaternary structure, homodecamer; pentamer of dimers. It depends on Mg(2+) as a cofactor.

The protein localises to the cytoplasm. It carries out the reaction 3-methyl-2-oxobutanoate + (6R)-5,10-methylene-5,6,7,8-tetrahydrofolate + H2O = 2-dehydropantoate + (6S)-5,6,7,8-tetrahydrofolate. The protein operates within cofactor biosynthesis; (R)-pantothenate biosynthesis; (R)-pantoate from 3-methyl-2-oxobutanoate: step 1/2. Its function is as follows. Catalyzes the reversible reaction in which hydroxymethyl group from 5,10-methylenetetrahydrofolate is transferred onto alpha-ketoisovalerate to form ketopantoate. The polypeptide is 3-methyl-2-oxobutanoate hydroxymethyltransferase (Thiobacillus denitrificans (strain ATCC 25259 / T1)).